The chain runs to 505 residues: uncharacterized protein (505 aa).

Positions 1-22 (MAILKSALVGFICFLHFFIVNA) are cleaved as a signal peptide. Asn-25 and Asn-114 each carry an N-linked (GlcNAc...) asparagine glycan. Helical transmembrane passes span 181–201 (LFLN…WSFI), 216–236 (ISGV…YFYF), 266–286 (FLLL…GSLL), 291–311 (ILAG…FISP), and 318–338 (VILF…LWIV). The N-linked (GlcNAc...) asparagine glycan is linked to Asn-342. Helical transmembrane passes span 365 to 385 (IVIC…AILI) and 400 to 420 (LLWF…MLTI). N-linked (GlcNAc...) asparagine glycosylation is present at Asn-454.

Belongs to the LU7TM family.

It localises to the membrane. This is an uncharacterized protein from Schizosaccharomyces pombe (strain 972 / ATCC 24843) (Fission yeast).